Here is a 99-residue protein sequence, read N- to C-terminus: Aspartyl/glutamyl-tRNA(Asn/Gln) amidotransferase subunit C (99 aa).

Belongs to the GatC family. As to quaternary structure, heterotrimer of A, B and C subunits.

The enzyme catalyses L-glutamyl-tRNA(Gln) + L-glutamine + ATP + H2O = L-glutaminyl-tRNA(Gln) + L-glutamate + ADP + phosphate + H(+). It catalyses the reaction L-aspartyl-tRNA(Asn) + L-glutamine + ATP + H2O = L-asparaginyl-tRNA(Asn) + L-glutamate + ADP + phosphate + 2 H(+). In terms of biological role, allows the formation of correctly charged Asn-tRNA(Asn) or Gln-tRNA(Gln) through the transamidation of misacylated Asp-tRNA(Asn) or Glu-tRNA(Gln) in organisms which lack either or both of asparaginyl-tRNA or glutaminyl-tRNA synthetases. The reaction takes place in the presence of glutamine and ATP through an activated phospho-Asp-tRNA(Asn) or phospho-Glu-tRNA(Gln). This Methylibium petroleiphilum (strain ATCC BAA-1232 / LMG 22953 / PM1) protein is Aspartyl/glutamyl-tRNA(Asn/Gln) amidotransferase subunit C.